We begin with the raw amino-acid sequence, 58 residues long: MFSWGLTFLTIDNSLTNWLMIVLLFCSTGMVFLATILESGTCSAFTTVPEFPAPIFPN.

The helical transmembrane segment at Trp18–Glu38 threads the bilayer.

Its subcellular location is the membrane. This is an uncharacterized protein from Saccharomyces cerevisiae (strain ATCC 204508 / S288c) (Baker's yeast).